The chain runs to 230 residues: N-(5'-phosphoribosyl)anthranilate isomerase (230 aa).

This sequence belongs to the TrpF family.

The catalysed reaction is N-(5-phospho-beta-D-ribosyl)anthranilate = 1-(2-carboxyphenylamino)-1-deoxy-D-ribulose 5-phosphate. It functions in the pathway amino-acid biosynthesis; L-tryptophan biosynthesis; L-tryptophan from chorismate: step 3/5. This chain is N-(5'-phosphoribosyl)anthranilate isomerase, found in Trichodesmium erythraeum (strain IMS101).